Consider the following 113-residue polypeptide: Putative pterin-4-alpha-carbinolamine dehydratase (113 aa).

Belongs to the pterin-4-alpha-carbinolamine dehydratase family.

The enzyme catalyses (4aS,6R)-4a-hydroxy-L-erythro-5,6,7,8-tetrahydrobiopterin = (6R)-L-erythro-6,7-dihydrobiopterin + H2O. The protein is Putative pterin-4-alpha-carbinolamine dehydratase of Idiomarina loihiensis (strain ATCC BAA-735 / DSM 15497 / L2-TR).